Reading from the N-terminus, the 577-residue chain is Protein NUCLEOLAR COMPLEX ASSOCIATED 4 (577 aa).

The tract at residues 230-263 (PEKQAEKSQHEMWSGSDESISEKPTDKKKKTEKG) is disordered. A run of 3 helical transmembrane segments spans residues 329-349 (IGGVVSVMALSSLFILMTQHG), 350-370 (LEYPFFYEKLYALLVPSVFVA), and 404-424 (LSLSIPPAGSLVITALIYNLL).

Belongs to the CBF/MAK21 family. Component of the ribosomal small subunit (SSU) processome composed of at least 40 protein subunits and snoRNA U3. In terms of tissue distribution, mostly expressed in flowers and stems and at lower levels in roots, hypocotyls, siliques, leaves and seeds.

It is found in the nucleus membrane. The protein resides in the nucleus. The protein localises to the nucleolus. Its function is as follows. Essential protein required during embryogenesis. Involved in nucleolar processing of ribosomal RNA (rRNA) 40S and 90S ribosomal subunits and ribosome assembly; early in ribosome biogenesis, especially required during the maturation of 5.8S rRNA. Has a role in the nuclear export of 40S pre-ribosomal subunit to the cytoplasm. The polypeptide is Protein NUCLEOLAR COMPLEX ASSOCIATED 4 (Arabidopsis thaliana (Mouse-ear cress)).